The sequence spans 764 residues: Polyribonucleotide nucleotidyltransferase (764 aa).

The Mg(2+) site is built by Asp-555 and Asp-561. In terms of domain architecture, KH spans 621 to 680 (PHITSINIPQNKIGEVIGPKGKTINQITEETGANITIEDDGTVFISAVGGESAREAEEKI). An S1 motif domain is found at 692–761 (GDRFLGTVVK…NRGKISLVLV (70 aa)).

Belongs to the polyribonucleotide nucleotidyltransferase family. The cofactor is Mg(2+).

Its subcellular location is the cytoplasm. The catalysed reaction is RNA(n+1) + phosphate = RNA(n) + a ribonucleoside 5'-diphosphate. Functionally, involved in mRNA degradation. Catalyzes the phosphorolysis of single-stranded polyribonucleotides processively in the 3'- to 5'-direction. This Corynebacterium jeikeium (strain K411) protein is Polyribonucleotide nucleotidyltransferase.